A 316-amino-acid polypeptide reads, in one-letter code: MLEMEKPRIDCVEKNSSSNYGRFVIEPLERGYGTTLGNSLRRVLLSSLPGAAVTSIKIDGVLHEFSTIPGVLEDTTEIILNIKKLVLSYTGSERKIIRLEQQGPKEVKASDITPDAEVEILNPDLHLASLDEDGKVEIEMTVERGRGYVSSDQQPQKNDDIVGLIPIDSIFTPVSRVNYTVENARVGKRTDYDRLNLEVWTNGSISPEEAISLSAQILIEYLKLFTEIDDTYAEVEILVEKEEEKKDKILEMSIEELELSVRASNGLKRASINTVGDLIAKNREEMSKIRNLGQKSLEEIERKLKELNLSFRKSED.

Residues Met-1 to Asp-229 form an alpha N-terminal domain (alpha-NTD) region. Residues Lys-246–Asp-316 form an alpha C-terminal domain (alpha-CTD) region.

This sequence belongs to the RNA polymerase alpha chain family. Homodimer. The RNAP catalytic core consists of 2 alpha, 1 beta, 1 beta' and 1 omega subunit. When a sigma factor is associated with the core the holoenzyme is formed, which can initiate transcription.

The catalysed reaction is RNA(n) + a ribonucleoside 5'-triphosphate = RNA(n+1) + diphosphate. Its function is as follows. DNA-dependent RNA polymerase catalyzes the transcription of DNA into RNA using the four ribonucleoside triphosphates as substrates. The protein is DNA-directed RNA polymerase subunit alpha of Syntrophomonas wolfei subsp. wolfei (strain DSM 2245B / Goettingen).